The sequence spans 322 residues: Acetyl-coenzyme A carboxylase carboxyl transferase subunit alpha (322 aa).

The region spanning 39–296 (DLTALKKQLI…HSKLVTELNY (258 aa)) is the CoA carboxyltransferase C-terminal domain.

Belongs to the AccA family. Acetyl-CoA carboxylase is a heterohexamer composed of biotin carboxyl carrier protein (accB), biotin carboxylase (accC) and two subunits each of ACCase subunit alpha (accA) and ACCase subunit beta (accD).

The protein localises to the plastid. It is found in the chloroplast. It carries out the reaction N(6)-carboxybiotinyl-L-lysyl-[protein] + acetyl-CoA = N(6)-biotinyl-L-lysyl-[protein] + malonyl-CoA. Its pathway is lipid metabolism; malonyl-CoA biosynthesis; malonyl-CoA from acetyl-CoA: step 1/1. Component of the acetyl coenzyme A carboxylase (ACC) complex. First, biotin carboxylase catalyzes the carboxylation of biotin on its carrier protein (BCCP) and then the CO(2) group is transferred by the carboxyltransferase to acetyl-CoA to form malonyl-CoA. The protein is Acetyl-coenzyme A carboxylase carboxyl transferase subunit alpha of Antithamnion sp. (Red alga).